A 72-amino-acid polypeptide reads, in one-letter code: UPF0154 protein Bcer98_2334 (72 aa).

A helical transmembrane segment spans residues 3–23; that stretch reads IWSGILVGVVALLAGVALGFF.

It belongs to the UPF0154 family.

Its subcellular location is the cell membrane. The protein is UPF0154 protein Bcer98_2334 of Bacillus cytotoxicus (strain DSM 22905 / CIP 110041 / 391-98 / NVH 391-98).